A 127-amino-acid polypeptide reads, in one-letter code: Small ribosomal subunit protein uS12 (127 aa).

A 3-methylthioaspartic acid modification is found at Asp-89.

The protein belongs to the universal ribosomal protein uS12 family. In terms of assembly, part of the 30S ribosomal subunit. Contacts proteins S8 and S17. May interact with IF1 in the 30S initiation complex.

With S4 and S5 plays an important role in translational accuracy. Its function is as follows. Interacts with and stabilizes bases of the 16S rRNA that are involved in tRNA selection in the A site and with the mRNA backbone. Located at the interface of the 30S and 50S subunits, it traverses the body of the 30S subunit contacting proteins on the other side and probably holding the rRNA structure together. The combined cluster of proteins S8, S12 and S17 appears to hold together the shoulder and platform of the 30S subunit. This Campylobacter fetus subsp. fetus (strain 82-40) protein is Small ribosomal subunit protein uS12.